Reading from the N-terminus, the 566-residue chain is Arginine--tRNA ligase (566 aa).

The short motif at 121-131 (ANPNGPFHIGH) is the 'HIGH' region element.

It belongs to the class-I aminoacyl-tRNA synthetase family.

The protein localises to the cytoplasm. The enzyme catalyses tRNA(Arg) + L-arginine + ATP = L-arginyl-tRNA(Arg) + AMP + diphosphate. The protein is Arginine--tRNA ligase of Methanococcus maripaludis (strain C5 / ATCC BAA-1333).